Here is a 458-residue protein sequence, read N- to C-terminus: Ribulose bisphosphate carboxylase large chain (458 aa).

At lysine 7 the chain carries N6,N6,N6-trimethyllysine. Asparagine 116 and threonine 166 together coordinate substrate. Lysine 168 serves as the catalytic Proton acceptor. Lysine 170 contacts substrate. The Mg(2+) site is built by lysine 194, aspartate 196, and glutamate 197. Residue lysine 194 is modified to N6-carboxylysine. The active-site Proton acceptor is histidine 287. Positions 288, 320, and 372 each coordinate substrate.

It belongs to the RuBisCO large chain family. Type I subfamily. In terms of assembly, heterohexadecamer of 8 large chains and 8 small chains; disulfide-linked. The disulfide link is formed within the large subunit homodimers. It depends on Mg(2+) as a cofactor. Post-translationally, the disulfide bond which can form in the large chain dimeric partners within the hexadecamer appears to be associated with oxidative stress and protein turnover.

The protein localises to the plastid. It is found in the chloroplast. The catalysed reaction is 2 (2R)-3-phosphoglycerate + 2 H(+) = D-ribulose 1,5-bisphosphate + CO2 + H2O. It carries out the reaction D-ribulose 1,5-bisphosphate + O2 = 2-phosphoglycolate + (2R)-3-phosphoglycerate + 2 H(+). Functionally, ruBisCO catalyzes two reactions: the carboxylation of D-ribulose 1,5-bisphosphate, the primary event in carbon dioxide fixation, as well as the oxidative fragmentation of the pentose substrate in the photorespiration process. Both reactions occur simultaneously and in competition at the same active site. The protein is Ribulose bisphosphate carboxylase large chain of Gladiolus gueinzii (Coastal gladiolus).